The sequence spans 205 residues: ITG-like peptide (205 aa).

The first 15 residues, 1–15 (MRVYAAITLVLVANT), serve as a signal peptide directing secretion. Propeptides lie at residues 16 to 188 (AYIG…TSGE) and 202 to 205 (MPFA).

As to expression, expressed throughout the nervous system (at protein level).

It localises to the secreted. This is ITG-like peptide from Camponotus floridanus (Florida carpenter ant).